The chain runs to 389 residues: MKTTMNFVFLFFLPLLINAKPKRVTLHIPLVHNGANFYDSKVVSLPLSSPHSQRGLAFMAEIHFGSPQKKQFLHMDTGSSLTWTQCFPCSDCYAQKIYPKYRPAASITYRDAMCEDSHPKSNPHFAFDPLTRICTYQQHYLDETNIKGTLAQEMITVDTHDGGFKRVHGVYFGCNTLSDGSYFTGTGILGLGVGKYSIIGEFGSKFSFCLGEISEPKASHNLILGDGANVQGHPTVINITEGHTIFQLESIIVGEEITLDDPVQVFVDTGSTLSHLSTNLYYKFVDAFDDLIGSRPLSYEPTLCYKADTIERLEKMDVGFKFDVGAELSVNIHNIFIQQGPPEIRCLAIQNNKESFSHVIIGVIAMQGYNVGYDLSAKTAYINKQDCDM.

Residues 1–19 (MKTTMNFVFLFFLPLLINA) form the signal peptide. The Peptidase A1 domain occupies 58–383 (FMAEIHFGSP…DLSAKTAYIN (326 aa)). D76 is a catalytic residue. C86 and C92 form a disulfide bridge. N238 is a glycosylation site (N-linked (GlcNAc...) asparagine). The active site involves D268. A disulfide bond links C304 and C346.

It belongs to the peptidase A1 family.

Functionally, probable aspartic protease activated by the transcription factor MYB80. May participate in the regulation of the timing of tapetal programmed cell death (PCD) which is critical for pollen development. The chain is Aspartyl protease UND from Arabidopsis thaliana (Mouse-ear cress).